The primary structure comprises 645 residues: Methionine--tRNA ligase (645 aa).

Positions 13 to 23 match the 'HIGH' region motif; sequence YYPSTNLHIGN. Residues C128, C131, C145, and C148 each coordinate Zn(2+). Residues 298-302 carry the 'KMSKS' region motif; sequence KMSKS. K301 contacts ATP. A tRNA-binding domain is found at 544–645; it reads DFDKIDLRVV…GEMLTGSQVR (102 aa).

Belongs to the class-I aminoacyl-tRNA synthetase family. MetG type 2A subfamily. In terms of assembly, homodimer. The cofactor is Zn(2+).

The protein resides in the cytoplasm. It carries out the reaction tRNA(Met) + L-methionine + ATP = L-methionyl-tRNA(Met) + AMP + diphosphate. Is required not only for elongation of protein synthesis but also for the initiation of all mRNA translation through initiator tRNA(fMet) aminoacylation. The chain is Methionine--tRNA ligase (metG) from Clostridium perfringens (strain 13 / Type A).